Reading from the N-terminus, the 440-residue chain is Transposon Ty1-A Gag polyprotein (440 aa).

4 stretches are compositionally biased toward polar residues: residues 1–23, 48–60, 71–93, and 127–152; these read MESQ…SVTS, TKAN…TPAS, SPQT…MMTQ, and QSQF…GNTF. Disordered regions lie at residues 1–93, 126–173, and 352–440; these read MESQ…MMTQ, PQSQ…RPPP, and GSRN…PETY. Residues 153 to 165 are compositionally biased toward low complexity; sequence TDSSSADSDMTST. The interval 299–401 is RNA-binding; the sequence is NNGIHINNKV…NSKSKTARAH (103 aa). The span at 402–418 shows a compositional bias: low complexity; sequence NVSTSNNSPSTDNDSIS. At Ser-416 the chain carries Phosphoserine. Residues 419–428 are compositionally biased toward polar residues; the sequence is KSTTEPIQLN. Residues 429–440 show a composition bias toward basic and acidic residues; sequence NKHDLHLRPETY.

As to quaternary structure, homotrimer.

The protein localises to the cytoplasm. In terms of biological role, capsid protein (CA) is the structural component of the virus-like particle (VLP), forming the shell that encapsulates the retrotransposons dimeric RNA genome. The particles are assembled from trimer-clustered units and there are holes in the capsid shells that allow for the diffusion of macromolecules. CA also has nucleocapsid-like chaperone activity, promoting primer tRNA(i)-Met annealing to the multipartite primer-binding site (PBS), dimerization of Ty1 RNA and initiation of reverse transcription. This Saccharomyces cerevisiae (strain ATCC 204508 / S288c) (Baker's yeast) protein is Transposon Ty1-A Gag polyprotein (TY1A-A).